The sequence spans 282 residues: Homeobox protein CDX-4 (282 aa).

Disordered stretches follow at residues 13-36 and 98-156; these read MYPG…GGSG and MNDM…SPYA. Residues 20–29 are compositionally biased toward low complexity; sequence SPGGSSTAGV. 2 stretches are compositionally biased toward polar residues: residues 110-124 and 133-148; these read DYST…SNGG and SLVS…TSPS. The segment at residues 171 to 230 is a DNA-binding region (homeobox); that stretch reads KEKYRVVYTDHQRLELEKEFHCNRYITIRRKSELAVNLGLSERQVKIWFQNRRAKERKMI.

The protein belongs to the Caudal homeobox family.

The protein localises to the nucleus. This chain is Homeobox protein CDX-4 (Cdx4), found in Mus musculus (Mouse).